The primary structure comprises 398 residues: Acetylornithine aminotransferase (398 aa).

Residues 105–106 (GA) and Phe138 contribute to the pyridoxal 5'-phosphate site. Residue Arg141 participates in N(2)-acetyl-L-ornithine binding. 223-226 (DEVQ) is a pyridoxal 5'-phosphate binding site. An N6-(pyridoxal phosphate)lysine modification is found at Lys252. Residue Thr280 participates in N(2)-acetyl-L-ornithine binding. Position 281 (Thr281) interacts with pyridoxal 5'-phosphate.

Belongs to the class-III pyridoxal-phosphate-dependent aminotransferase family. ArgD subfamily. In terms of assembly, homodimer. It depends on pyridoxal 5'-phosphate as a cofactor.

Its subcellular location is the cytoplasm. It catalyses the reaction N(2)-acetyl-L-ornithine + 2-oxoglutarate = N-acetyl-L-glutamate 5-semialdehyde + L-glutamate. The protein operates within amino-acid biosynthesis; L-arginine biosynthesis; N(2)-acetyl-L-ornithine from L-glutamate: step 4/4. This is Acetylornithine aminotransferase from Methanocaldococcus jannaschii (strain ATCC 43067 / DSM 2661 / JAL-1 / JCM 10045 / NBRC 100440) (Methanococcus jannaschii).